The primary structure comprises 967 residues: Isoleucine--tRNA ligase 2 (967 aa).

The 'HIGH' region motif lies at 58 to 68 (PYANGDIHIGH). The interval 430 to 463 (EADPGRADVTEEAGATGEARKVGKAEEAEEAGPV) is disordered. Residue Glu-598 coordinates L-isoleucyl-5'-AMP. Residues 639 to 643 (KMSKS) carry the 'KMSKS' region motif. Lys-642 lines the ATP pocket. Zn(2+)-binding residues include Cys-922, Cys-925, Cys-942, and Cys-945.

Belongs to the class-I aminoacyl-tRNA synthetase family. IleS type 1 subfamily. As to quaternary structure, monomer. It depends on Zn(2+) as a cofactor.

It localises to the cytoplasm. The enzyme catalyses tRNA(Ile) + L-isoleucine + ATP = L-isoleucyl-tRNA(Ile) + AMP + diphosphate. Functionally, catalyzes the attachment of isoleucine to tRNA(Ile). As IleRS can inadvertently accommodate and process structurally similar amino acids such as valine, to avoid such errors it has two additional distinct tRNA(Ile)-dependent editing activities. One activity is designated as 'pretransfer' editing and involves the hydrolysis of activated Val-AMP. The other activity is designated 'posttransfer' editing and involves deacylation of mischarged Val-tRNA(Ile). This chain is Isoleucine--tRNA ligase 2, found in Burkholderia pseudomallei (strain K96243).